Consider the following 343-residue polypeptide: Cyclin-Y-like protein 1-B (343 aa).

Residues 1-69 (MGNTVTCCVS…ECNPSDHPQA (69 aa)) are disordered. Basic and acidic residues predominate over residues 17–28 (AGRDRRVAERGE). The Cyclin N-terminal domain occupies 145 to 267 (DIFDEKLHPL…FLELLQFNIN (123 aa)).

This sequence belongs to the cyclin family. Cyclin Y subfamily.

This chain is Cyclin-Y-like protein 1-B (ccnyl1-b), found in Xenopus laevis (African clawed frog).